The following is a 273-amino-acid chain: Gamma-glutamyl cyclotransferase gliK (273 aa).

The chain crosses the membrane as a helical span at residues 227–243 (WLGWIILTLYGLMWSYH).

It belongs to the class-I pyridoxal-phosphate-dependent aminotransferase family.

Its subcellular location is the membrane. The enzyme catalyses an alpha-(gamma-L-glutamyl)-L-amino acid = 5-oxo-L-proline + an L-alpha-amino acid. It participates in mycotoxin biosynthesis. Gamma-glutamyl cyclotransferase-like protein; part of the gene cluster that mediates the biosynthesis of gliotoxin, a member of the epipolythiodioxopiperazine (ETP) class of toxins characterized by a disulfide bridged cyclic dipeptide. The first step in gliotoxin biosynthesis is the condensation of serine and phenylalanine to form the cyclo-L-phenylalanyl-L-serine diketopiperazine (DKP) by the NRPS gliP. GliP is also able to produce the DKP cyclo-L-tryptophanyl-L-serine, suggesting that the substrate specificity of the first adenylation (A) domain in gliP is sufficiently relaxed to accommodate both L-Phe and L-Trp. The cytochrome P450 monooxygenase gliC has been shown to catalyze the subsequent hydroxylation of the alpha-carbon of L-Phe in cyclo-L-phenylalanyl-L-serine whereas the second cytochrome P450 enzyme, gliF, is presumably involved in the modification of the DKP side chain. The glutathione S-transferase (GST) gliG then forms a bis-glutathionylated biosynthetic intermediate which is responsible for the sulfurization of gliotoxin. This bis-glutathionylated intermediate is subsequently processed by the gamma-glutamyl cyclotransferase gliK to remove both gamma-glutamyl moieties. Subsequent processing via gliI yields a biosynthetic intermediate, which is N-methylated via the N-methyltransferase gliN, before the gliotoxin oxidoreductase gliT-mediated disulfide bridge closure. GliN-mediated amide methylation confers stability to ETP, damping the spontaneous formation of tri- and tetrasulfides. Intracellular dithiol gliotoxin oxidized by gliT is subsequently effluxed by gliA. Gliotoxin contributes to pathogenesis during invasive aspergillosis. In macrophages and neutrophils, gliotoxin showed inhibition of various different cell functions including cytokine production, antigen presentation, phagocytosis, and production of reactive oxygen species. The chain is Gamma-glutamyl cyclotransferase gliK from Aspergillus fumigatus (strain ATCC MYA-4609 / CBS 101355 / FGSC A1100 / Af293) (Neosartorya fumigata).